A 72-amino-acid polypeptide reads, in one-letter code: Putative sodium channel toxin Ts18 (72 aa).

Positions 1 to 21 (MNFRFPFLLMITISLIGAVLT) are cleaved as a signal peptide. Cystine bridges form between Cys38/Cys61, Cys47/Cys66, and Cys51/Cys68.

It belongs to the long (3 C-C) scorpion toxin superfamily. In terms of tissue distribution, expressed by the venom gland.

It localises to the secreted. Binds to sodium channels (Nav) and affects the channel activation process. The polypeptide is Putative sodium channel toxin Ts18 (Tityus serrulatus (Brazilian scorpion)).